The following is a 287-amino-acid chain: MGIRNYRPYTPGTRQKSVSDFSEITHDQPEKSLTSFRHRAKGRNNRGVITSRRRGGGHKRLYREIDFRRNKLSVPGTVLTVEYDPNRNARISLVQYEDGEKRYILHPRNLAVGAVIAAGPDAAIEVGNALPLSKIPLGTGVHNVEITPGRGGQMVRAAGAMAQVVAKEGDMVTLKLPSGEVRLFRKECYATIGQIGNVDVNNISIGKAGRNRWKGRRPKVRGSVMNPVDHPHGGGEGRAPIGRSGPVTPWGKPTLGYKTRKKKKLSNALIVRRRRKSSKRGRGGRQS.

Disordered regions lie at residues 1 to 30 (MGIR…DQPE) and 211 to 287 (NRWK…GRQS). Over residues 12-22 (GTRQKSVSDFS) the composition is skewed to polar residues. Basic residues-rich tracts occupy residues 211–220 (NRWKGRRPKV) and 258–287 (KTRK…GRQS).

Belongs to the universal ribosomal protein uL2 family. As to quaternary structure, part of the 50S ribosomal subunit. Forms a bridge to the 30S subunit in the 70S ribosome.

Functionally, one of the primary rRNA binding proteins. Required for association of the 30S and 50S subunits to form the 70S ribosome, for tRNA binding and peptide bond formation. It has been suggested to have peptidyltransferase activity; this is somewhat controversial. Makes several contacts with the 16S rRNA in the 70S ribosome. In Cyanothece sp. (strain PCC 7425 / ATCC 29141), this protein is Large ribosomal subunit protein uL2.